Consider the following 239-residue polypeptide: 7-cyano-7-deazaguanine synthase (239 aa).

Residue 13-23 (FSGGQDSTTCL) participates in ATP binding. Residues C192, C201, C204, and C207 each coordinate Zn(2+).

The protein belongs to the QueC family. Zn(2+) is required as a cofactor.

The enzyme catalyses 7-carboxy-7-deazaguanine + NH4(+) + ATP = 7-cyano-7-deazaguanine + ADP + phosphate + H2O + H(+). The protein operates within purine metabolism; 7-cyano-7-deazaguanine biosynthesis. Functionally, catalyzes the ATP-dependent conversion of 7-carboxy-7-deazaguanine (CDG) to 7-cyano-7-deazaguanine (preQ(0)). The sequence is that of 7-cyano-7-deazaguanine synthase from Shewanella sp. (strain MR-4).